The chain runs to 282 residues: Probable iron transport system membrane protein HI_0360 (282 aa).

8 helical membrane passes run 17 to 37 (AMIL…YLML), 63 to 83 (LPYA…ILWI), 93 to 113 (AVIG…VSLN), 140 to 160 (IIIG…LLIF), 164 to 184 (TQAI…FTLL), 186 to 206 (ACVV…MVVT), 223 to 243 (IIAI…SYYL), and 245 to 265 (GATG…AFLF).

This sequence belongs to the ABC-3 integral membrane protein family.

The protein resides in the cell inner membrane. Functionally, part of an ATP-driven transport system HI_0359/HI_0360/HI_0361/HI_0362 for iron. This is Probable iron transport system membrane protein HI_0360 from Haemophilus influenzae (strain ATCC 51907 / DSM 11121 / KW20 / Rd).